A 108-amino-acid polypeptide reads, in one-letter code: Thiosulfate sulfurtransferase GlpE (108 aa).

Residues 18–106 (ENEGATLADI…WERSGLPIET (89 aa)) form the Rhodanese domain. Catalysis depends on Cys-66, which acts as the Cysteine persulfide intermediate.

It belongs to the GlpE family.

The protein resides in the cytoplasm. It catalyses the reaction thiosulfate + hydrogen cyanide = thiocyanate + sulfite + 2 H(+). It carries out the reaction thiosulfate + [thioredoxin]-dithiol = [thioredoxin]-disulfide + hydrogen sulfide + sulfite + 2 H(+). Functionally, transferase that catalyzes the transfer of sulfur from thiosulfate to thiophilic acceptors such as cyanide or dithiols. May function in a CysM-independent thiosulfate assimilation pathway by catalyzing the conversion of thiosulfate to sulfite, which can then be used for L-cysteine biosynthesis. This chain is Thiosulfate sulfurtransferase GlpE, found in Actinobacillus pleuropneumoniae serotype 3 (strain JL03).